The primary structure comprises 206 residues: Large ribosomal subunit protein uL4 (206 aa).

The disordered stretch occupies residues 47–94; sequence NRAQKGRAEVSKSTRKPWRQKGTGRARAGMASSPLWRGGGRVFPNSPE. Residues 59-70 show a composition bias toward basic residues; the sequence is STRKPWRQKGTG.

The protein belongs to the universal ribosomal protein uL4 family. As to quaternary structure, part of the 50S ribosomal subunit.

Its function is as follows. One of the primary rRNA binding proteins, this protein initially binds near the 5'-end of the 23S rRNA. It is important during the early stages of 50S assembly. It makes multiple contacts with different domains of the 23S rRNA in the assembled 50S subunit and ribosome. In terms of biological role, forms part of the polypeptide exit tunnel. This is Large ribosomal subunit protein uL4 from Aromatoleum aromaticum (strain DSM 19018 / LMG 30748 / EbN1) (Azoarcus sp. (strain EbN1)).